We begin with the raw amino-acid sequence, 204 residues long: ATP phosphoribosyltransferase (204 aa).

This sequence belongs to the ATP phosphoribosyltransferase family. Short subfamily. In terms of assembly, heteromultimer composed of HisG and HisZ subunits.

Its subcellular location is the cytoplasm. The enzyme catalyses 1-(5-phospho-beta-D-ribosyl)-ATP + diphosphate = 5-phospho-alpha-D-ribose 1-diphosphate + ATP. It participates in amino-acid biosynthesis; L-histidine biosynthesis; L-histidine from 5-phospho-alpha-D-ribose 1-diphosphate: step 1/9. In terms of biological role, catalyzes the condensation of ATP and 5-phosphoribose 1-diphosphate to form N'-(5'-phosphoribosyl)-ATP (PR-ATP). Has a crucial role in the pathway because the rate of histidine biosynthesis seems to be controlled primarily by regulation of HisG enzymatic activity. In Campylobacter concisus (strain 13826), this protein is ATP phosphoribosyltransferase.